Consider the following 382-residue polypeptide: Pyrimidine monooxygenase RutA (382 aa).

Residues 68 to 69, asparagine 134, glutamate 143, 159 to 160, and serine 209 each bind FMN; these read IK and RY.

This sequence belongs to the NtaA/SnaA/DszA monooxygenase family. RutA subfamily.

It catalyses the reaction uracil + FMNH2 + NADH + O2 = (Z)-3-ureidoacrylate + FMN + NAD(+) + H2O + H(+). The enzyme catalyses thymine + FMNH2 + NADH + O2 = (Z)-2-methylureidoacrylate + FMN + NAD(+) + H2O + H(+). Its function is as follows. Catalyzes the pyrimidine ring opening between N-3 and C-4 by an unusual flavin hydroperoxide-catalyzed mechanism, adding oxygen atoms in the process to yield ureidoacrylate peracid, that immediately reacts with FMN forming ureidoacrylate and FMN-N(5)-oxide. The FMN-N(5)-oxide reacts spontaneously with NADH to produce FMN. Requires the flavin reductase RutF to regenerate FMN in vivo. In Shigella flexneri serotype X (strain 2002017), this protein is Pyrimidine monooxygenase RutA.